A 277-amino-acid polypeptide reads, in one-letter code: UPF0276 protein PSEEN3355 (277 aa).

It belongs to the UPF0276 family.

The chain is UPF0276 protein PSEEN3355 from Pseudomonas entomophila (strain L48).